Reading from the N-terminus, the 277-residue chain is Phosphatidylglycerol--prolipoprotein diacylglyceryl transferase (277 aa).

Helical transmembrane passes span 16–36, 62–82, and 101–121; these read FFQIHWYGLTYLAAFGLFYFL, LLFFGVVGVILGGRLGYVLFY, and GMAFHGGLLGVIVAMALFAHL. Arginine 145 provides a ligand contact to a 1,2-diacyl-sn-glycero-3-phospho-(1'-sn-glycerol). A run of 2 helical transmembrane segments spans residues 214-234 and 243-263; these read PIWGRVSGLFVGGYGVFRFIA and FLGLLAFNLSMGQWLCVPMIV.

It belongs to the Lgt family.

The protein resides in the cell inner membrane. The enzyme catalyses L-cysteinyl-[prolipoprotein] + a 1,2-diacyl-sn-glycero-3-phospho-(1'-sn-glycerol) = an S-1,2-diacyl-sn-glyceryl-L-cysteinyl-[prolipoprotein] + sn-glycerol 1-phosphate + H(+). The protein operates within protein modification; lipoprotein biosynthesis (diacylglyceryl transfer). Its function is as follows. Catalyzes the transfer of the diacylglyceryl group from phosphatidylglycerol to the sulfhydryl group of the N-terminal cysteine of a prolipoprotein, the first step in the formation of mature lipoproteins. This chain is Phosphatidylglycerol--prolipoprotein diacylglyceryl transferase, found in Leptothrix cholodnii (strain ATCC 51168 / LMG 8142 / SP-6) (Leptothrix discophora (strain SP-6)).